The primary structure comprises 327 residues: Small ribosomal subunit protein RACK1 (327 aa).

WD repeat units follow at residues 13–44, 61–91, 103–133, 148–180, 192–222, 233–262, and 293–323; these read AHTD…IVWK, GHSH…RLWD, GHTK…KLWN, GHRD…KVWN, GHTG…LLWD, EANS…KIWD, and RKVI…RVWG.

Belongs to the WD repeat G protein beta family. Ribosomal protein RACK1 subfamily.

The chain is Small ribosomal subunit protein RACK1 (GB1) from Brassica napus (Rape).